The chain runs to 512 residues: 2-isopropylmalate synthase (512 aa).

The region spanning 5–268 is the Pyruvate carboxyltransferase domain; that stretch reads LIIFDTTLRD…DVDIETQHIL (264 aa). Mn(2+)-binding residues include Asp-14, His-202, His-204, and Asn-239. The segment at 394–512 is regulatory domain; sequence SFVSLSQHSE…SKADRVAAQG (119 aa).

The protein belongs to the alpha-IPM synthase/homocitrate synthase family. LeuA type 1 subfamily. As to quaternary structure, homodimer. It depends on Mn(2+) as a cofactor.

It is found in the cytoplasm. It carries out the reaction 3-methyl-2-oxobutanoate + acetyl-CoA + H2O = (2S)-2-isopropylmalate + CoA + H(+). It functions in the pathway amino-acid biosynthesis; L-leucine biosynthesis; L-leucine from 3-methyl-2-oxobutanoate: step 1/4. Catalyzes the condensation of the acetyl group of acetyl-CoA with 3-methyl-2-oxobutanoate (2-ketoisovalerate) to form 3-carboxy-3-hydroxy-4-methylpentanoate (2-isopropylmalate). The polypeptide is 2-isopropylmalate synthase (Albidiferax ferrireducens (strain ATCC BAA-621 / DSM 15236 / T118) (Rhodoferax ferrireducens)).